The primary structure comprises 398 residues: Elongation factor Tu (398 aa).

One can recognise a tr-type G domain in the interval 10 to 207; sequence KPHVNIGTIG…TVDDYIPDPE (198 aa). The interval 19–26 is G1; sequence GHVDHGKT. Residue 19–26 participates in GTP binding; that stretch reads GHVDHGKT. Mg(2+) is bound at residue threonine 26. Residues 63-67 form a G2 region; that stretch reads GITIN. The segment at 84–87 is G3; that stretch reads DAPG. Residues 84–88 and 139–142 contribute to the GTP site; these read DAPGH and NKVD. The interval 139 to 142 is G4; the sequence is NKVD. The tract at residues 177 to 179 is G5; that stretch reads SAL.

It belongs to the TRAFAC class translation factor GTPase superfamily. Classic translation factor GTPase family. EF-Tu/EF-1A subfamily. Monomer.

Its subcellular location is the cytoplasm. The catalysed reaction is GTP + H2O = GDP + phosphate + H(+). GTP hydrolase that promotes the GTP-dependent binding of aminoacyl-tRNA to the A-site of ribosomes during protein biosynthesis. The sequence is that of Elongation factor Tu from Streptococcus mutans serotype c (strain ATCC 700610 / UA159).